A 501-amino-acid polypeptide reads, in one-letter code: MKKISLLLASLCALFLVACSNQKQADGKLNIVTTFYPVYEFTKQVAGDTANVELLIGAGTEPHEYEPSAKAVAKIQDADTFVYENENMETWVPKLLDTLDKKKVKTIKATGDMLLLPGGEEEEGDHDHGEEGHHHEFDPHVWLSPVRAIKLVEHIRDSLSADYPDKKETFEKNAAAYIEKLQALDKAYAEGLSQAKQKSFVTQHAAFNYLALDYGLKQVAISGLSPDAEPSAARLAELTEYVKKNKIAYIYFEENASQALANTLSKEAGVKTDVLNPLESLTEEDTKAGENYISVMEKNLKALKQTTDQEGPAIEPEKAEDTKTVQNGYFEDAAVKDRTLSDYAGNWQSVYPFLEDGTFDQVFDYKAKLTGKMTQAEYKAYYTKGYHTDVTKINITDNTMEFVQGGQSKKYTYKYVGKKILTYKKGNRGVRFLFEATDADAGQFKYVQFSDHNVAPVKAEHFHIFFGGTSQEALFEEMDNWPTYYPDNLSGQEIAQEMLAH.

The first 18 residues, 1–18, serve as a signal peptide directing secretion; it reads MKKISLLLASLCALFLVA. A lipid anchor (N-palmitoyl cysteine) is attached at Cys19. Cys19 is lipidated: S-diacylglycerol cysteine. His63 provides a ligand contact to Zn(2+). The disordered stretch occupies residues 116 to 136; sequence LPGGEEEEGDHDHGEEGHHHE. Residues 120 to 136 are his-rich loop; the sequence is EEEEGDHDHGEEGHHHE. Residues 125-136 are compositionally biased toward basic and acidic residues; sequence DHDHGEEGHHHE. Zn(2+) contacts are provided by His140, His204, and Glu279.

The protein belongs to the bacterial solute-binding protein 9 family.

Its subcellular location is the cell membrane. In terms of biological role, part of the ATP-binding cassette (ABC) transport system AdcABC involved in zinc import. Binds zinc with high affinity and specificity and delivers it to the membrane permease for translocation into the cytoplasm. The chain is Zinc-binding lipoprotein AdcA (adcA) from Streptococcus pneumoniae serotype 4 (strain ATCC BAA-334 / TIGR4).